The following is a 380-amino-acid chain: Cytochrome b (380 aa).

4 helical membrane passes run 34–54, 78–99, 114–134, and 179–199; these read FGSLLGICLITQIITGLLLAM, WLIRHLHANGASFFFICIYLHI, WNIGVILLLTLMATAFVGYVL, and LFALHFLLPFVIAGLTLVHLT. Heme b-binding residues include His-84 and His-98. His-183 and His-197 together coordinate heme b. His-202 is an a ubiquinone binding site. Transmembrane regions (helical) follow at residues 227–247, 289–309, 321–341, and 348–368; these read IKDLLGFVLMLTPLIAMALFA, LGGVLALAASVLVLFLIPLLH, LSQMLFWTLVADLLILTWVGS, and FIIIGQLASLAYFTIILVLFP.

This sequence belongs to the cytochrome b family. The cytochrome bc1 complex contains 11 subunits: 3 respiratory subunits (MT-CYB, CYC1 and UQCRFS1), 2 core proteins (UQCRC1 and UQCRC2) and 6 low-molecular weight proteins (UQCRH/QCR6, UQCRB/QCR7, UQCRQ/QCR8, UQCR10/QCR9, UQCR11/QCR10 and a cleavage product of UQCRFS1). This cytochrome bc1 complex then forms a dimer. The cofactor is heme b.

The protein localises to the mitochondrion inner membrane. Component of the ubiquinol-cytochrome c reductase complex (complex III or cytochrome b-c1 complex) that is part of the mitochondrial respiratory chain. The b-c1 complex mediates electron transfer from ubiquinol to cytochrome c. Contributes to the generation of a proton gradient across the mitochondrial membrane that is then used for ATP synthesis. This is Cytochrome b (MT-CYB) from Aphelocoma coerulescens (Florida scrub-jay).